We begin with the raw amino-acid sequence, 975 residues long: Leucine-zipper-like transcriptional regulator 1 homolog (975 aa).

Positions 16-32 (RGGGGGGCGGGGAGGSA) are enriched in gly residues. Disordered regions lie at residues 16–41 (RGGG…TSGS) and 158–186 (MSSS…SCSS). Residues 174 to 186 (ASSSHPPGSSCSS) show a composition bias toward low complexity. Kelch repeat units lie at residues 263–312 (AMFV…VAGS), 314–369 (MFIF…VYDN), 370–417 (KMWI…PVAV), 421–467 (AMYV…PSRR), 478–524 (FLYV…FHAS), and 530–581 (AMYI…FIVG). BTB domains follow at residues 574 to 670 (CDIQ…DLKD) and 801 to 870 (CDIS…KMPP).

This sequence belongs to the LZTR1 family. In terms of assembly, component of some BCR (BTB-CUL3-RBX1) E3 ubiquitin-protein ligase complex. As to expression, expressed in Rdl-expressing neurons of the mushroom body, the neurons projecting to the LC9 optic glomerulus and in a neuronal cluster near the subesophageal ganglion (at protein level).

It participates in protein modification; protein ubiquitination. Its function is as follows. Inhibitor of Ras signaling. Acts as a substrate-specific adapter of a BCR (BTB-CUL3-RBX1) E3 ubiquitin-protein ligase complex that mediates ubiquitination of Ras. Together with Nf1, plays an important role for normal sleep behavior, mainly during the night. Might affect sleep by modulating GABA signaling in Rdl-expressing neurons. Might play a role in the regulation of brain glycogen metabolism and organismal levels of triglycerides. The sequence is that of Leucine-zipper-like transcriptional regulator 1 homolog from Drosophila melanogaster (Fruit fly).